The sequence spans 550 residues: Nucleoside hydrolase 4 (550 aa).

This sequence belongs to the IUNH family.

It is found in the cytoplasm. Functionally, may be involved in the degradation of nucleosides. The protein is Nucleoside hydrolase 4 of Arabidopsis thaliana (Mouse-ear cress).